The following is a 190-amino-acid chain: Putative manganese efflux pump MntP (190 aa).

Helical transmembrane passes span 6–26 (IWLL…TSGI), 36–56 (FFIM…IGWF), 61–81 (FSHL…AFWG), 108–128 (LAIA…FVGI), 138–158 (IVII…IGVF), and 169–189 (LWGG…HLFL).

It belongs to the MntP (TC 9.B.29) family.

It is found in the cell inner membrane. Functionally, probably functions as a manganese efflux pump. The sequence is that of Putative manganese efflux pump MntP from Phocaeicola vulgatus (strain ATCC 8482 / DSM 1447 / JCM 5826 / CCUG 4940 / NBRC 14291 / NCTC 11154) (Bacteroides vulgatus).